Reading from the N-terminus, the 111-residue chain is MSLRPCLTPSSMQYSDIYIYPNTTLTLPYFNPSNLSLNLPSHYPTSPLVTLSHSTIPLPTTIHPSTYYHQSTVHHNRYPPISHIQLHYHLPCHYSTIHHLLLTILLFYPPY.

This is an uncharacterized protein from Saccharomyces cerevisiae (strain ATCC 204508 / S288c) (Baker's yeast).